Here is a 1142-residue protein sequence, read N- to C-terminus: Serine/threonine-protein kinase dst2 (1142 aa).

The region spanning 20–276 (FELIEEIAEG…ATELLKHPFV (257 aa)) is the Protein kinase domain. ATP contacts are provided by residues 26 to 34 (IAEGSFGTV) and Lys-49. Residue Asp-141 is the Proton acceptor of the active site. The segment covering 300–322 (LEEGGDEDEDSSEQEGMDSDDKD) has biased composition (acidic residues). Disordered regions lie at residues 300 to 492 (LEEG…KTLE), 515 to 636 (KKQQ…KSTP), 744 to 768 (ETNH…TEQR), 939 to 974 (SIEE…GSVT), and 1040 to 1142 (EEQK…DNQD). The span at 323 to 336 (SDLKKSVGTSDRKS) shows a compositional bias: basic and acidic residues. Polar residues predominate over residues 355–365 (QRKSTGQNLQL). Residues 371-390 (QQSSSSSSSSSSSLSSQSLQ) are compositionally biased toward low complexity. Polar residues predominate over residues 391–413 (PQAVNKSTDRLSANINGSNTKSN). The span at 421–452 (AAASASASSLNLSTGNLQQSLSGSGSITTNSG) shows a compositional bias: low complexity. Residues 467–477 (SSDDRSPDIRT) show a composition bias toward basic and acidic residues. The span at 541–554 (KQNAAKATQQQKQS) shows a compositional bias: low complexity. Basic and acidic residues-rich tracts occupy residues 555–588 (AAKE…KKNQ), 597–635 (KVTD…DKST), 744–760 (ETNH…EQHI), and 939–969 (SIEE…EQKK). Positions 716-1050 (QEYHTVLREN…EQKKSKLKLK (335 aa)) form a coiled coil. The segment covering 1068–1091 (TGTTPPSTSSNQKTLNNSNGASSN) has biased composition (low complexity).

This sequence belongs to the protein kinase superfamily. STE Ser/Thr protein kinase family. STE20 subfamily. The cofactor is Mg(2+).

It catalyses the reaction L-seryl-[protein] + ATP = O-phospho-L-seryl-[protein] + ADP + H(+). The enzyme catalyses L-threonyl-[protein] + ATP = O-phospho-L-threonyl-[protein] + ADP + H(+). In Dictyostelium discoideum (Social amoeba), this protein is Serine/threonine-protein kinase dst2.